The following is a 61-amino-acid chain: Large ribosomal subunit protein bL32 (61 aa).

A compositionally biased stretch (basic residues) spans 1–16 (MAVPKRKTSPSKRGMR). Residues 1-39 (MAVPKRKTSPSKRGMRRSADALKAPTYIEDKNSGELRRP) are disordered. Residues 28–39 (IEDKNSGELRRP) are compositionally biased toward basic and acidic residues.

This sequence belongs to the bacterial ribosomal protein bL32 family.

The chain is Large ribosomal subunit protein bL32 from Rhizobium meliloti (strain 1021) (Ensifer meliloti).